A 109-amino-acid chain; its full sequence is Staphostatin B (109 aa).

Positions I97–R101 are binds to staphopain B.

This sequence belongs to the protease inhibitor I57 (SspC) family. In terms of assembly, forms a stable non-covalent complex with prematurely activated/folded SspB.

Its subcellular location is the cytoplasm. Specifically inhibits the cysteine protease staphopain B (SspB) by blocking the active site of the enzyme. Probably required to protect cytoplasmic proteins from being degraded by prematurely activated/folded prostaphopain B. Also involved in growth capacity, viability and bacterial morphology. This Staphylococcus aureus (strain MRSA252) protein is Staphostatin B (sspC).